The chain runs to 792 residues: Phosphatidylinositol 4-phosphate 5-kinase type-1 sktl (792 aa).

Over residues 1–21 the composition is skewed to basic and acidic residues; the sequence is MDTRVELELEPVGKQDRLKDQ. Disordered stretches follow at residues 1–74, 105–139, 423–446, 577–612, and 640–714; these read MDTR…QPGT, TQTP…KKLG, AKLQ…DAPE, TPTF…PTNA, and AAST…TDLS. Composition is skewed to polar residues over residues 52-62 and 105-131; these read QTASPDQEATP and TQTP…STTG. Positions 155–573 constitute a PIPK domain; the sequence is QSKQIMGSIQ…RFQDAMGKQV (419 aa). The segment covering 642–658 has biased composition (low complexity); sequence STSSLQQQRSSNQSNNN. A compositionally biased stretch (polar residues) spans 678–702; sequence EPSSTYHTQYSYDSSGRTGSALTSD.

As to quaternary structure, interacts with ash2 (via B30.2/SPRY domain); the interaction is direct and seems to be specific for ash2 isoform B.

Its subcellular location is the cytoplasm. The protein resides in the cell cortex. The protein localises to the nucleus. It is found in the chromosome. It localises to the apical cell membrane. Its subcellular location is the cell projection. The protein resides in the cilium. The protein localises to the flagellum membrane. The catalysed reaction is a 1,2-diacyl-sn-glycero-3-phospho-(1D-myo-inositol 4-phosphate) + ATP = a 1,2-diacyl-sn-glycero-3-phospho-(1D-myo-inositol-4,5-bisphosphate) + ADP + H(+). Catalyzes the phosphorylation of phosphatidylinositol 4-phosphate (PtdIns[4]P) to form phosphatidylinositol 4,5-bisphosphate (PtdIns[4,5]P(2)), a lipid second messenger that regulates several cellular processes such as signal transduction, vesicle trafficking, actin cytoskeleton dynamics, cell adhesion, and cell motility. PtdIns[4,5]P(2) can directly act as a second messenger or can be utilized as a precursor to generate other second messengers: inositol 1,4,5-trisphosphate (IP3), diacylglycerol (DAG) or phosphatidylinositol-3,4,5-trisphosphate (PtdIns[3,4,5]P(3)). Required for germline development during oogenesis. Sktl is the major phosphatidylinositol 4-phosphate 5-kinase responsible for enrichment of PtdIns[4,5]P(2) in the apical plasma membrane of the oocyte and follicular epithelium cells of the egg chamber during oogenesis. Involved in nuclear anchoring and microtubule organization required for targeted mRNA transport during maintenance of oocyte polarity. The PtdIns[4,5]P(2) produced by sktl is required for maintenance of cellular polarity, prevention of the epithelial-mesenchymal transition process, maintenance of adherens junctions and regulation of apical constriction, probably by affecting polarized cortical recruitment of PAR proteins and their effectors, including baz/bazooka, aPKC, par-1 and l(2)gl. Involved in actin cytoskeleton organization probably through PtdIns[4,5]P(2)-mediated regulation of Moe/Moesin phosphorylation. Involved in PtdIns[4,5]P(2)-mediated apical recruitment of the formin dia/diaphanous in tubular epithelial cells. Involved in anterodorsal cell morphogenesis and eggshell dorsal appendage formation, probably through regulation of apical constriction by PtdIns[4,5]P(2) during tubulogenesis. Required for cell viability or proliferation during wing and eye imaginal disk development. May be involved in cytoskeletal regulation during sensory bristle development. Together with mys/integrin beta localizes to the trailing edge of larval epidermal cells in a JNK signaling-dependent manner during wound healing and is required for setting up cell polarity and re-epithelialization. Required for polarization of elongating spermatid cysts possibly by generation of PtdIns[4,5]P(2) involved in mediating membrane association and orientation of the nucleus-basal body pair. Probably involved in PtdIns[4,5]P(2)-mediated recruitment of exocyst proteins that may mediate membrane addition during spermatid elongation. Involved in maintenance of specialised cell contacts known as slit diaphragms required for nephrocyte morphogenesis and function. Regulates nephrocyte endocytosis, possibly through PtdIns[4,5]P(2)-mediated recruitment of effector proteins. Not required for nervous system development or neurotransmitter release at the neuromuscular junction. Together with ash2 probably plays a role in maintenance of transcriptionally active chromatin through down-regulation of histone H1 hyperphosphorylation. The sequence is that of Phosphatidylinositol 4-phosphate 5-kinase type-1 sktl from Drosophila melanogaster (Fruit fly).